A 235-amino-acid polypeptide reads, in one-letter code: Exosome complex component Rrp4 (235 aa).

The region spanning Gly-67–Gln-139 is the S1 motif domain. The KH domain occupies Gly-149–Ala-205.

This sequence belongs to the RRP4 family. As to quaternary structure, component of the archaeal exosome complex. Forms a trimer of Rrp4 and/or Csl4 subunits. The trimer associates with a hexameric ring-like arrangement composed of 3 Rrp41-Rrp42 heterodimers.

The protein resides in the cytoplasm. Functionally, non-catalytic component of the exosome, which is a complex involved in RNA degradation. Increases the RNA binding and the efficiency of RNA degradation. Confers strong poly(A) specificity to the exosome. In Aeropyrum pernix (strain ATCC 700893 / DSM 11879 / JCM 9820 / NBRC 100138 / K1), this protein is Exosome complex component Rrp4.